We begin with the raw amino-acid sequence, 102 residues long: U7-agatoxin-Ao1a (102 aa).

The N-terminal stretch at 1-19 is a signal peptide; it reads MTQAFFFLLLVSLVASTLS. The propeptide occupies 20–39; it reads KEFNFCPRAIDEVCPVKEKR. Tryptophan 101 is modified (tryptophan amide).

Belongs to the venom protein 11 family. 02 (wap-2) subfamily. Contains 5 disulfide bonds. Expressed by the venom gland.

The protein resides in the secreted. This Agelena orientalis (Funnel-web spider) protein is U7-agatoxin-Ao1a.